The following is a 599-amino-acid chain: Elongation factor 4 (599 aa).

Residues 5–187 form the tr-type G domain; the sequence is SHIRNFSIIA…RLVHTIPAPE (183 aa). GTP contacts are provided by residues 17–22 and 134–137; these read DHGKST and NKMD.

Belongs to the TRAFAC class translation factor GTPase superfamily. Classic translation factor GTPase family. LepA subfamily.

Its subcellular location is the cell inner membrane. The enzyme catalyses GTP + H2O = GDP + phosphate + H(+). Functionally, required for accurate and efficient protein synthesis under certain stress conditions. May act as a fidelity factor of the translation reaction, by catalyzing a one-codon backward translocation of tRNAs on improperly translocated ribosomes. Back-translocation proceeds from a post-translocation (POST) complex to a pre-translocation (PRE) complex, thus giving elongation factor G a second chance to translocate the tRNAs correctly. Binds to ribosomes in a GTP-dependent manner. This is Elongation factor 4 from Pseudomonas putida (strain ATCC 47054 / DSM 6125 / CFBP 8728 / NCIMB 11950 / KT2440).